The primary structure comprises 442 residues: GTPase HflX (442 aa).

In terms of domain architecture, Hflx-type G spans 186 to 362 (VLVALAGYTN…ALNRVVLKLP (177 aa)). Residues 192 to 199 (GYTNAGKS), 217 to 221 (FTTLD), 238 to 241 (DTVG), 306 to 309 (NKID), and 341 to 343 (SAR) contribute to the GTP site. 2 residues coordinate Mg(2+): S199 and T219.

Belongs to the TRAFAC class OBG-HflX-like GTPase superfamily. HflX GTPase family. As to quaternary structure, monomer. Associates with the 50S ribosomal subunit. The cofactor is Mg(2+).

The protein localises to the cytoplasm. Functionally, GTPase that associates with the 50S ribosomal subunit and may have a role during protein synthesis or ribosome biogenesis. This chain is GTPase HflX, found in Thermococcus kodakarensis (strain ATCC BAA-918 / JCM 12380 / KOD1) (Pyrococcus kodakaraensis (strain KOD1)).